Reading from the N-terminus, the 108-residue chain is UPF0102 protein Sfri_0388 (108 aa).

The protein belongs to the UPF0102 family.

The polypeptide is UPF0102 protein Sfri_0388 (Shewanella frigidimarina (strain NCIMB 400)).